We begin with the raw amino-acid sequence, 289 residues long: Phosphatidylinositol:ceramide inositolphosphotransferase 3 (289 aa).

5 consecutive transmembrane segments (helical) span residues 33 to 53 (LVLAGLVFQYIHGLAAHGVHY), 77 to 97 (AFFSETVFVTIFGSFILWTFH), 115 to 135 (VFVYLAASQSLRIITFFATQL), 169 to 189 (VIYGCGDLIFSSHTIFTLVFV), and 199 to 219 (RWIKHLAWLMAVIQSILIIAS). His181 is an active-site residue. Residues His222 and Asp226 contribute to the active site. A helical membrane pass occupies residues 223–243 (YTVDIVVAWYTVNLVMFYVDS). The interval 249–289 (AERSSGPSPTPLLPLSTKDSKNKSKEDHQRLLNENNVADDH) is disordered. The segment covering 266–279 (KDSKNKSKEDHQRL) has biased composition (basic and acidic residues). Positions 280-289 (LNENNVADDH) are enriched in polar residues.

It belongs to the sphingomyelin synthase family. Mostly expressed in stems and flowers, and, to a lower extent, in leaves, roots and siliques.

Its subcellular location is the membrane. In terms of biological role, catalyzes the transfer of the phosphorylinositol group from phosphatidylinositol (PI) to phytoceramide, an essential step in sphingolipid biosynthesis. In Arabidopsis thaliana (Mouse-ear cress), this protein is Phosphatidylinositol:ceramide inositolphosphotransferase 3 (IPCS3).